The primary structure comprises 423 residues: COP9 signalosome complex subunit 3 (423 aa).

A PCI domain is found at 197–365 (NFERALYFFE…GMVCFHDNPE (169 aa)). Residues 402–423 (QFVQKSMGTQEDDVGSKTSSYS) form a disordered region.

Belongs to the CSN3 family. Component of the CSN complex, probably composed of cops1, cops2, cops3, cops4, cops5, cops6, cops7, cops8 and cops9.

It is found in the cytoplasm. Its subcellular location is the nucleus. Component of the COP9 signalosome complex (CSN), a complex involved in various cellular and developmental processes. The CSN complex is an essential regulator of the ubiquitin (Ubl) conjugation pathway by mediating the deneddylation of the cullin subunits of E3 ligase complexes, leading to modify the Ubl ligase activity. The polypeptide is COP9 signalosome complex subunit 3 (cops3) (Danio rerio (Zebrafish)).